A 520-amino-acid polypeptide reads, in one-letter code: Protein nucleotidyltransferase YdiU (520 aa).

Positions 108, 110, 111, 130, 142, 143, 193, and 200 each coordinate ATP. The active-site Proton acceptor is aspartate 269. Mg(2+) contacts are provided by asparagine 270 and aspartate 279. Residue aspartate 279 participates in ATP binding.

This sequence belongs to the SELO family. Requires Mg(2+) as cofactor. It depends on Mn(2+) as a cofactor.

The catalysed reaction is L-seryl-[protein] + ATP = 3-O-(5'-adenylyl)-L-seryl-[protein] + diphosphate. It catalyses the reaction L-threonyl-[protein] + ATP = 3-O-(5'-adenylyl)-L-threonyl-[protein] + diphosphate. The enzyme catalyses L-tyrosyl-[protein] + ATP = O-(5'-adenylyl)-L-tyrosyl-[protein] + diphosphate. It carries out the reaction L-histidyl-[protein] + UTP = N(tele)-(5'-uridylyl)-L-histidyl-[protein] + diphosphate. The catalysed reaction is L-seryl-[protein] + UTP = O-(5'-uridylyl)-L-seryl-[protein] + diphosphate. It catalyses the reaction L-tyrosyl-[protein] + UTP = O-(5'-uridylyl)-L-tyrosyl-[protein] + diphosphate. Its function is as follows. Nucleotidyltransferase involved in the post-translational modification of proteins. It can catalyze the addition of adenosine monophosphate (AMP) or uridine monophosphate (UMP) to a protein, resulting in modifications known as AMPylation and UMPylation. The polypeptide is Protein nucleotidyltransferase YdiU (Cupriavidus pinatubonensis (strain JMP 134 / LMG 1197) (Cupriavidus necator (strain JMP 134))).